Consider the following 216-residue polypeptide: Octanoyltransferase (216 aa).

Residues 33 to 216 (AATADELWIV…ANRLSTSLSR (184 aa)) form the BPL/LPL catalytic domain. Residues 72–79 (RGGEVTYH), 148–150 (ALG), and 162–164 (GVS) each bind substrate. C180 serves as the catalytic Acyl-thioester intermediate.

The protein belongs to the LipB family.

Its subcellular location is the cytoplasm. The enzyme catalyses octanoyl-[ACP] + L-lysyl-[protein] = N(6)-octanoyl-L-lysyl-[protein] + holo-[ACP] + H(+). It participates in protein modification; protein lipoylation via endogenous pathway; protein N(6)-(lipoyl)lysine from octanoyl-[acyl-carrier-protein]: step 1/2. Catalyzes the transfer of endogenously produced octanoic acid from octanoyl-acyl-carrier-protein onto the lipoyl domains of lipoate-dependent enzymes. Lipoyl-ACP can also act as a substrate although octanoyl-ACP is likely to be the physiological substrate. In Janthinobacterium sp. (strain Marseille) (Minibacterium massiliensis), this protein is Octanoyltransferase.